Reading from the N-terminus, the 959-residue chain is AP2-associated protein kinase 1 (959 aa).

Met-1 carries the N-acetylmethionine modification. Positions Met-1–Gln-11 are enriched in basic and acidic residues. A disordered region spans residues Met-1–Ser-27. Position 14 is a phosphoserine (Ser-14). Gly residues predominate over residues Ser-14–Ser-27. The Protein kinase domain maps to Val-46–Leu-315. Residues Leu-52 to Val-60 and Lys-74 each bind ATP. Asp-176 acts as the Proton acceptor in catalysis. Position 234 is a phosphotyrosine (Tyr-234). A Phosphoserine modification is found at Ser-235. The tract at residues Ser-340 to Gln-385 is disordered. Thr-354 and Thr-389 each carry phosphothreonine. At Arg-391 the chain carries Omega-N-methylarginine. Disordered regions lie at residues Pro-398–Pro-514 and Thr-578–His-630. A compositionally biased stretch (polar residues) spans Gly-404–Lys-419. Low complexity predominate over residues Ala-420–Gln-435. Thr-441 is subject to Phosphothreonine. Composition is skewed to low complexity over residues Gln-444 to Gln-481, Gln-494 to Gln-510, and Thr-578 to Thr-603. At Thr-604 the chain carries Phosphothreonine. The segment covering Ile-609–Thr-625 has biased composition (polar residues). Position 616 is a phosphoserine (Ser-616). Thr-618 is modified (phosphothreonine). Phosphoserine occurs at positions 621, 622, 635, and 648. Thr-651 is subject to Phosphothreonine. Disordered stretches follow at residues Ser-662–Asp-699, Gly-727–Ala-763, Pro-837–Leu-857, and Ile-923–Leu-943. A compositionally biased stretch (polar residues) spans Thr-670–Asn-694. Residue Ser-729 is modified to Phosphoserine. Polar residues-rich tracts occupy residues Gln-738–Ala-752 and Leu-842–Leu-857. Residues Asp-821–Asp-958 form a clathrin-binding domain (CBD) region. Phosphoserine occurs at positions 844, 935, and 936. Residues Gly-929–Ser-942 are compositionally biased toward low complexity.

This sequence belongs to the protein kinase superfamily. Ser/Thr protein kinase family. In terms of assembly, interacts (via CBD domain) with clathrin. Interacts with AP-2 complex. Interacts with NUMB. Interacts with alpha-adaptin. Interacts with EPS15 isoform 2. Interacts with membrane-bound activated NOTCH1 but not with the inactive full-length form of NOTCH1. Preferentially interacts with monoubiquitinated activated NOTCH1 compared to the non-ubiquitinated form. Autophosphorylated.

It localises to the cell membrane. Its subcellular location is the membrane. The protein resides in the clathrin-coated pit. It is found in the presynapse. The catalysed reaction is L-seryl-[protein] + ATP = O-phospho-L-seryl-[protein] + ADP + H(+). It catalyses the reaction L-threonyl-[protein] + ATP = O-phospho-L-threonyl-[protein] + ADP + H(+). Stimulated by clathrin. In terms of biological role, regulates clathrin-mediated endocytosis by phosphorylating the AP2M1/mu2 subunit of the adaptor protein complex 2 (AP-2) which ensures high affinity binding of AP-2 to cargo membrane proteins during the initial stages of endocytosis. Preferentially, may phosphorylate substrates on threonine residues. Regulates phosphorylation of other AP-2 subunits as well as AP-2 localization and AP-2-mediated internalization of ligand complexes. Phosphorylates NUMB and regulates its cellular localization, promoting NUMB localization to endosomes. Binds to and stabilizes the activated form of NOTCH1, increases its localization in endosomes and regulates its transcriptional activity. The chain is AP2-associated protein kinase 1 (Aak1) from Mus musculus (Mouse).